We begin with the raw amino-acid sequence, 758 residues long: 5-methyltetrahydropteroyltriglutamate--homocysteine methyltransferase (758 aa).

5-methyltetrahydropteroyltri-L-glutamate contacts are provided by residues 16–19 (RELK) and K116. Residues 436 to 438 (IGS) and E489 each bind L-homocysteine. Residues 436 to 438 (IGS) and E489 contribute to the L-methionine site. 5-methyltetrahydropteroyltri-L-glutamate is bound by residues 520–521 (RC) and W566. D604 is an L-homocysteine binding site. Residue D604 participates in L-methionine binding. Position 610 (E610) interacts with 5-methyltetrahydropteroyltri-L-glutamate. Positions 646, 648, and 670 each coordinate Zn(2+). The active-site Proton donor is H699. C731 serves as a coordination point for Zn(2+).

It belongs to the vitamin-B12 independent methionine synthase family. It depends on Zn(2+) as a cofactor.

It catalyses the reaction 5-methyltetrahydropteroyltri-L-glutamate + L-homocysteine = tetrahydropteroyltri-L-glutamate + L-methionine. The protein operates within amino-acid biosynthesis; L-methionine biosynthesis via de novo pathway; L-methionine from L-homocysteine (MetE route): step 1/1. Its function is as follows. Catalyzes the transfer of a methyl group from 5-methyltetrahydrofolate to homocysteine resulting in methionine formation. The chain is 5-methyltetrahydropteroyltriglutamate--homocysteine methyltransferase from Xylella fastidiosa (strain 9a5c).